The chain runs to 308 residues: uncharacterized protein (308 aa).

Positions 158 to 221 (GDSNAETFEE…DSINHGESSE (64 aa)) are disordered. A compositionally biased stretch (basic and acidic residues) spans 206-221 (RNGDRSDSINHGESSE).

This is an uncharacterized protein from Arabidopsis thaliana (Mouse-ear cress).